The sequence spans 75 residues: MSCNCGSGCSCGSDCKCGKMYPDLTEQGSAAAQVAAVVVLGVAPENKAGQFEVAAGQSGEGCSCGDNCKCNPCNC.

This sequence belongs to the metallothionein superfamily. Type 15 family.

In terms of biological role, metallothioneins have a high content of cysteine residues that bind various heavy metals. The chain is Metallothionein-like protein 1 (ALI1) from Triticum aestivum (Wheat).